A 299-amino-acid polypeptide reads, in one-letter code: MKTNSEELTVFVQVVESGSFSRAAEQLAMANSAVSRIVKRLEEKLGVNLLNRTTRQLSLTEEGAQYFRRAQRILQEMAAAETEMLAVHEIPQGVLSVDSAMPMVLHLLAPLAAKFNERYPHIRLSLVSSEGYINLIERKVDIALRAGELDDSGLRARHLFDSRFRVIASPEYLAKHGTPQSTEELAGHQCLGFTEPGSLNTWAVLDAQGNPYKISPHFTASSGEILRSLCLSGCGIVCLSDFLVDNDIAEGKLIPLLAEQTSDKTHPFNAVYYSDKAVNLRLRVFLDFLVEELGNNLCG.

The region spanning 1–60 (MKTNSEELTVFVQVVESGSFSRAAEQLAMANSAVSRIVKRLEEKLGVNLLNRTTRQLSLT) is the HTH lysR-type domain. The H-T-H motif DNA-binding region spans 20-39 (FSRAAEQLAMANSAVSRIVK).

The protein belongs to the LysR transcriptional regulatory family. As to quaternary structure, forms oligomers. Forms an octomeric ring-like structure in solution. May form hexadecamers when bound to target DNA.

Activation and repression activities are enhanced by the addition of alpha-methylene-gamma-butyrolactone (MBL), an inducer of NADPH:quinone oxidoreductase. Its function is as follows. Regulatory protein that activates transcription of mdaB, encoding a NADPH:quinone oxidoreductase, and represses its own transcription. Under the same experimental conditions, no regulation of transcription of pilus and capsule genes is detected. This chain is HTH-type transcriptional regulator CrgA, found in Neisseria meningitidis serogroup B (strain ATCC BAA-335 / MC58).